The primary structure comprises 410 residues: Multidrug resistance protein MdtM (410 aa).

The Cytoplasmic portion of the chain corresponds to 1 to 11 (MPRFFTRHAAT). The helical transmembrane segment at 12–32 (LFFPMALILYDFAAYLSTDLI) threads the bilayer. Topologically, residues 33-48 (QPGIINVVRDFNADVS) are periplasmic. The helical transmembrane segment at 49–69 (LAPAAVSLYLAGGMALQWLLG) threads the bilayer. The Cytoplasmic segment spans residues 70–78 (PLSDRIGRR). The helical transmembrane segment at 79 to 99 (PVLITGALIFTLACAATMFTT) threads the bilayer. Topologically, residues 100 to 103 (SMTQ) are periplasmic. A helical membrane pass occupies residues 104 to 124 (FLIARAIQGTSICFIATVGYV). Residues 125–140 (TVQEAFGQTKGIKLMA) lie on the Cytoplasmic side of the membrane. Residues 141–161 (IITSIVLIAPIIGPLSGAALM) traverse the membrane as a helical segment. Residues 162 to 167 (HFMHWK) are Periplasmic-facing. The helical transmembrane segment at 168 to 188 (VLFAIIAVMGFISFVGLLLAM) threads the bilayer. The Cytoplasmic portion of the chain corresponds to 189–216 (PETVKRGAVPFSAKSVLRDFRNVFCNRL). A helical membrane pass occupies residues 217 to 237 (FLFGAATISLSYIPMMSWVAV). Residues 238–251 (SPVILIDAGSLTTS) lie on the Periplasmic side of the membrane. A helical transmembrane segment spans residues 252-272 (QFAWTQVPVFGAVIVANAIVA). The Cytoplasmic portion of the chain corresponds to 273-282 (RFVKDPTEPR). The chain crosses the membrane as a helical span at residues 283–303 (FIWRAVPIQLVGLSLLIVGNL). Over 304–307 (LSPH) the chain is Periplasmic. Residues 308-328 (VWLWSVLGTSLYAFGIGLIFP) traverse the membrane as a helical segment. The Cytoplasmic segment spans residues 329–348 (TLFRFTLFSNKLPKGTVSAS). The chain crosses the membrane as a helical span at residues 349–369 (LNMVILMVMSVSVEIGRWLWF). The Periplasmic segment spans residues 370 to 373 (NGGR). Residues 374-394 (LPFHLLAVVAGVIVVFTLAGL) traverse the membrane as a helical segment. At 395–410 (LNRVRQHQAAELVEEQ) the chain is on the cytoplasmic side.

It belongs to the major facilitator superfamily. Monomer.

Its subcellular location is the cell inner membrane. It catalyses the reaction Na(+)(in) + 2 H(+)(out) = Na(+)(out) + 2 H(+)(in). It carries out the reaction K(+)(in) + H(+)(out) = K(+)(out) + H(+)(in). Efflux is inhibited by the ionophore carbonyl cyanide 3-chlorophenylhydrazone (CCCP). Its function is as follows. Proton-dependent efflux pump. Confers resistance to a broad spectrum of chemically unrelated substrates. Overexpression confers resistance to acriflavine, chloramphenicol, norfloxacin, ethidium bromide and tetraphenylphosphonium bromide (TPP). Can also export a broad range of quaternary ammonium compounds (QACs) and contribute to the intrinsic resistance of E.coli to these antimicrobial compounds. In addition to its role in multidrug resistance, MdtM likely plays a physiological role in alkaline pH homeostasis and in resistance to bile salts. May function in alkaline pH homeostasis when millimolar concentrations of sodium or potassium are present in the growth medium. When overexpressed, can confer a tolerance to alkaline pH values up to 9.75. Probably acts as a low-affinity antiporter that catalyzes the exchange of internal Na(+) and K(+) cations for extracellular protons to maintain a stable internal pH, acid relative to outside, during exposure to alkaline environments. Can also catalyze Rb(+)/H(+) and Li(+)/H(+) antiport, but not Ca(2+)/H(+) exchange. The exact stoichiometry of antiport is unknown. Finally, it could contribute to bile salt resistance by catalyzing the transport of bile salts out of the cell cytoplasm. Mediates a bile salt/H(+) exchange driven by the electrochemical gradient. Binds to cholate and deoxycholate with micromolar affinity and catalyzes both cholate/H(+) and deoxycholate/H(+) exchange reactions. The chain is Multidrug resistance protein MdtM from Escherichia coli (strain K12).